Consider the following 306-residue polypeptide: Probable cobalamin biosynthesis protein CobD (306 aa).

A run of 5 helical transmembrane segments spans residues 54–74 (LFGF…TYEI), 88–108 (ISIY…IEFS), 155–175 (ITDS…PGAF), 215–235 (IAGM…KSAI), and 286–306 (SLKA…VLLM).

Belongs to the CobD/CbiB family.

The protein resides in the cell membrane. It functions in the pathway cofactor biosynthesis; adenosylcobalamin biosynthesis. Its function is as follows. Converts cobyric acid to cobinamide by the addition of aminopropanol on the F carboxylic group. The polypeptide is Probable cobalamin biosynthesis protein CobD (Methanococcus maripaludis (strain C7 / ATCC BAA-1331)).